The sequence spans 236 residues: (5-formylfuran-3-yl)methyl phosphate synthase (236 aa).

The active-site Schiff-base intermediate with substrate is the Lys27. Lys85 functions as the Proton acceptor in the catalytic mechanism.

It belongs to the MfnB family.

The enzyme catalyses 2 D-glyceraldehyde 3-phosphate = 4-(hydroxymethyl)-2-furancarboxaldehyde phosphate + phosphate + 2 H2O. The protein operates within cofactor biosynthesis; methanofuran biosynthesis. In terms of biological role, catalyzes the formation of 4-(hydroxymethyl)-2-furancarboxaldehyde phosphate (4-HFC-P) from two molecules of glyceraldehyde-3-P (GA-3-P). This Methanococcus maripaludis (strain C6 / ATCC BAA-1332) protein is (5-formylfuran-3-yl)methyl phosphate synthase.